The following is a 213-amino-acid chain: ATP phosphoribosyltransferase (213 aa).

Belongs to the ATP phosphoribosyltransferase family. Short subfamily. Heteromultimer composed of HisG and HisZ subunits.

It is found in the cytoplasm. It carries out the reaction 1-(5-phospho-beta-D-ribosyl)-ATP + diphosphate = 5-phospho-alpha-D-ribose 1-diphosphate + ATP. It participates in amino-acid biosynthesis; L-histidine biosynthesis; L-histidine from 5-phospho-alpha-D-ribose 1-diphosphate: step 1/9. Its function is as follows. Catalyzes the condensation of ATP and 5-phosphoribose 1-diphosphate to form N'-(5'-phosphoribosyl)-ATP (PR-ATP). Has a crucial role in the pathway because the rate of histidine biosynthesis seems to be controlled primarily by regulation of HisG enzymatic activity. This chain is ATP phosphoribosyltransferase, found in Synechococcus sp. (strain RCC307).